The sequence spans 298 residues: Acetylglutamate kinase (298 aa).

Substrate-binding positions include 67-68 (GG), R89, and N193.

The protein belongs to the acetylglutamate kinase family. ArgB subfamily.

The protein localises to the cytoplasm. The enzyme catalyses N-acetyl-L-glutamate + ATP = N-acetyl-L-glutamyl 5-phosphate + ADP. It participates in amino-acid biosynthesis; L-arginine biosynthesis; N(2)-acetyl-L-ornithine from L-glutamate: step 2/4. Functionally, catalyzes the ATP-dependent phosphorylation of N-acetyl-L-glutamate. The polypeptide is Acetylglutamate kinase (Desulfitobacterium hafniense (strain DSM 10664 / DCB-2)).